The following is a 285-amino-acid chain: Single myb histone 3 (285 aa).

Positions 1-35 (MGAPKQKWTSEEEDALRRGVRKHGAGKWRTIQKDP) are disordered. The 60-residue stretch at 1-60 (MGAPKQKWTSEEEDALRRGVRKHGAGKWRTIQKDPQFSPILSSRSNIDLKDKWRNLSFSA) folds into the HTH myb-type domain. The segment at residues 28–56 (WRTIQKDPQFSPILSSRSNIDLKDKWRNL) is a DNA-binding region (H-T-H motif). The H15 domain maps to 113 to 181 (TPPKYGAMIM…KVDNFYRLPD (69 aa)). Positions 226 to 255 (VKVTDAEAKAHDAHDQMMEAERMLKMAEDT) form a coiled coil.

This sequence belongs to the histone H1/H5 family. SMH subfamily. As to quaternary structure, forms a homodimer and heterodimers.

The protein resides in the nucleus. It localises to the chromosome. Its subcellular location is the nucleolus. The protein localises to the telomere. Its function is as follows. Binds preferentially double-stranded telomeric repeats, but may also bind to the single telomeric strand. This chain is Single myb histone 3 (SMH3), found in Zea mays (Maize).